Reading from the N-terminus, the 206-residue chain is Adenine phosphoribosyltransferase (206 aa).

Belongs to the purine/pyrimidine phosphoribosyltransferase family. Homodimer.

The protein localises to the cytoplasm. It catalyses the reaction AMP + diphosphate = 5-phospho-alpha-D-ribose 1-diphosphate + adenine. It participates in purine metabolism; AMP biosynthesis via salvage pathway; AMP from adenine: step 1/1. Functionally, catalyzes a salvage reaction resulting in the formation of AMP, that is energically less costly than de novo synthesis. The sequence is that of Adenine phosphoribosyltransferase from Rhodopirellula baltica (strain DSM 10527 / NCIMB 13988 / SH1).